Consider the following 80-residue polypeptide: SPbeta prophage-derived uncharacterized HTH-type transcriptional regulator YotL (80 aa).

An HTH cro/C1-type domain is found at L12 to L67. The H-T-H motif DNA-binding region spans I23–G42.

The sequence is that of SPbeta prophage-derived uncharacterized HTH-type transcriptional regulator YotL (yotL) from Bacillus subtilis (strain 168).